The primary structure comprises 365 residues: Alanine racemase (365 aa).

Lys32 functions as the Proton acceptor; specific for D-alanine in the catalytic mechanism. Residue Lys32 is modified to N6-(pyridoxal phosphate)lysine. Arg128 lines the substrate pocket. Tyr257 functions as the Proton acceptor; specific for L-alanine in the catalytic mechanism. Substrate is bound at residue Met305.

The protein belongs to the alanine racemase family. It depends on pyridoxal 5'-phosphate as a cofactor.

It carries out the reaction L-alanine = D-alanine. The protein operates within amino-acid biosynthesis; D-alanine biosynthesis; D-alanine from L-alanine: step 1/1. Functionally, catalyzes the interconversion of L-alanine and D-alanine. May also act on other amino acids. In Francisella philomiragia subsp. philomiragia (strain ATCC 25017 / CCUG 19701 / FSC 153 / O#319-036), this protein is Alanine racemase (alr).